The following is a 254-amino-acid chain: Thiamine thiazole synthase (254 aa).

Residues serine 36, 55-56 (EK), glycine 63, valine 127, and 154-156 (HVD) each bind NAD(+). Fe cation-binding residues include aspartate 156 and histidine 171. Position 219 (methionine 219) interacts with NAD(+). Position 229 (arginine 229) interacts with glycine.

This sequence belongs to the THI4 family. As to quaternary structure, homooctamer; tetramer of dimers. The cofactor is Fe(2+).

The catalysed reaction is hydrogen sulfide + glycine + NAD(+) = ADP-5-ethyl-4-methylthiazole-2-carboxylate + nicotinamide + 3 H2O + H(+). Its pathway is cofactor biosynthesis; thiamine diphosphate biosynthesis. Its function is as follows. Involved in the biosynthesis of the thiazole moiety of thiamine. Catalyzes the conversion of NAD and glycine to adenosine diphosphate 5-(2-hydroxyethyl)-4-methylthiazole-2-carboxylate (ADT), an adenylated thiazole intermediate, using free sulfide as a source of sulfur. This Methanoculleus marisnigri (strain ATCC 35101 / DSM 1498 / JR1) protein is Thiamine thiazole synthase.